A 458-amino-acid chain; its full sequence is MAALRAGRGAGWSLRGWRALWGGRWGKGPLLTPDLRALLTSGTPDPRTRVTYGTPSFRARLSVGVPEPRTCLRSRTSDLRARLIAGTPDPRTPEDSGTPGTRLRVWLAVALGAGGAVLLLFWGGGRGPPAVLASVLGSPPTSPRSQYNFIADVVEKTAPAVVYIEILGRHPFSGREVPISNGSGFVVAADGLIVTNAHVVADRRRVRVRLPSGDTYEAVVTAVDPVADIATLRIQTKEPLPTLPLGRSADVRQGEFVVAMGSPFALQNTITSGIVSSAQRPAKDLGLPQTNVEYIQTDAAIDFGNSGGPLVNLDGEVIGVNTMKVTSGISFAIPSDRLREFLHRGEKKNSWFGISGSQRRYIGVMMLTLTPSILAELQLREPSFPDVQHGVLIHKVILDSPAHRAGLRPGDVILAIGEQLVQNAEDIYEAVRTQSQLAVRIRRGQETLTLYVTPEVTE.

The transit peptide at methionine 1–leucine 31 directs the protein to the mitochondrion. A propeptide spanning residues threonine 32–alanine 133 is cleaved from the precursor. The chain crosses the membrane as a helical span at residues valine 105 to glycine 125. An IAP-binding motif motif is present at residues serine 134–glycine 137. A serine protease region spans residues isoleucine 166–leucine 342. Residues histidine 198, aspartate 228, and serine 306 each act as charge relay system in the active site. One can recognise a PDZ domain in the interval valine 364 to glutamine 445.

This sequence belongs to the peptidase S1C family. As to quaternary structure, homotrimer. Interacts with MXI2. Interacts with THAP5 under apoptotic conditions. The mature protein, but not the precursor, binds to BIRC2/c-IAP1, BIRC3/c-IAP2 and XIAP/BIRC4. Interacts with BIRC6/bruce. Interacts with AREL1 (via HECT domain); in the cytoplasm following induction of apoptosis. Ubiquitinated by BIRC6; this activity is inhibited by DIABLO/SMAC. In terms of processing, autoproteolytically activated.

It localises to the mitochondrion intermembrane space. The protein resides in the mitochondrion membrane. The enzyme catalyses Cleavage of non-polar aliphatic amino-acids at the P1 position, with a preference for Val, Ile and Met. At the P2 and P3 positions, Arg is selected most strongly with a secondary preference for other hydrophilic residues.. Inhibited by BIRC6. Serine protease that shows proteolytic activity against a non-specific substrate beta-casein. Promotes apoptosis by either relieving the inhibition of BIRC proteins on caspases, leading to an increase in caspase activity; or by a BIRC inhibition-independent, caspase-independent and serine protease activity-dependent mechanism. Cleaves BIRC6 and relieves its inhibition on CASP3, CASP7 and CASP9, but it is also prone to inhibition by BIRC6. Cleaves THAP5 and promotes its degradation during apoptosis. The polypeptide is Serine protease HTRA2, mitochondrial (HTRA2) (Bos taurus (Bovine)).